A 464-amino-acid polypeptide reads, in one-letter code: L-cystine uptake protein TcyP (464 aa).

10 helical membrane passes run 3–23, 34–54, 73–93, 107–127, 184–204, 225–245, 263–283, 347–367, 371–391, and 395–415; these read TLLV…LYYM, VFTA…IYEP, YVKL…ISAF, GLII…GIAA, PTST…FIGV, IVMR…LALM, FVLA…LLIA, AGIY…IDPL, FILT…GVGG, and FAAL…ALVI.

Belongs to the dicarboxylate/amino acid:cation symporter (DAACS) (TC 2.A.23) family.

The protein localises to the membrane. Its function is as follows. Mediates uptake of L-cystine, the oxidized form of L-cysteine. The chain is L-cystine uptake protein TcyP from Bacillus thuringiensis (strain Al Hakam).